The sequence spans 104 residues: Flagellar hook-basal body complex protein FliE (104 aa).

Belongs to the FliE family.

The protein localises to the bacterial flagellum basal body. The sequence is that of Flagellar hook-basal body complex protein FliE from Enterobacter sp. (strain 638).